The following is a 331-amino-acid chain: Adenosine deaminase (331 aa).

His-12 and His-14 together coordinate Zn(2+). Substrate contacts are provided by His-14, Asp-16, and Gly-170. Residue His-197 participates in Zn(2+) binding. The active-site Proton donor is the Glu-200. Zn(2+) is bound at residue Asp-278. Asp-279 lines the substrate pocket.

It belongs to the metallo-dependent hydrolases superfamily. Adenosine and AMP deaminases family. Adenosine deaminase subfamily. It depends on Zn(2+) as a cofactor.

It catalyses the reaction adenosine + H2O + H(+) = inosine + NH4(+). The catalysed reaction is 2'-deoxyadenosine + H2O + H(+) = 2'-deoxyinosine + NH4(+). Its function is as follows. Catalyzes the hydrolytic deamination of adenosine and 2-deoxyadenosine. The polypeptide is Adenosine deaminase (Shewanella sp. (strain ANA-3)).